We begin with the raw amino-acid sequence, 952 residues long: MGVRHPPCSHRLLAVCALVSLATAALLGHILLHDFLLVPRELSGSSPVLEETHPAHQQGASRPGPRDAQAHPGRPRAVPTQCDVPPNSRFDCAPDKAITQEQCEARGCCYIPAKQGLQGAQMGQPWCFFPPSYPSYKLENLSSSEMGYTATLTRTTPTFFPKDILTLRLDVMMETENRLHFTIKDPANRRYEVPLETPHVHSRAPSPLYSVEFSEEPFGVIVRRQLDGRVLLNTTVAPLFFADQFLQLSTSLPSQYITGLAEHLSPLMLSTSWTRITLWNRDLAPTPGANLYGSHPFYLALEDGGSAHGVFLLNSNAMDVVLQPSPALSWRSTGGILDVYIFLGPEPKSVVQQYLDVVGYPFMPPYWGLGFHLCRWGYSSTAITRQVVENMTRAHFPLDVQWNDLDYMDSRRDFTFNKDGFRDFPAMVQELHQGGRRYMMIVDPAISSSGPAGSYRPYDEGLRRGVFITNETGQPLIGKVWPGSTAFPDFTNPTALAWWEDMVAEFHDQVPFDGMWIDMNEPSNFIRGSEDGCPNNELENPPYVPGVVGGTLQAATICASSHQFLSTHYNLHNLYGLTEAIASHRALVKARGTRPFVISRSTFAGHGRYAGHWTGDVWSSWEQLASSVPEILQFNLLGVPLVGADVCGFLGNTSEELCVRWTQLGAFYPFMRNHNSLLSLPQEPYSFSEPAQQAMRKALTLRYALLPHLYTLFHQAHVAGETVARPLFLEFPKDSSTWTVDHQLLWGEALLITPVLQAGKAEVTGYFPLGTWYDLQTVPVEALGSLPPPPAAPREPAIHSEGQWVTLPAPLDTINVHLRAGYIIPLQGPGLTTTESRQQPMALAVALTKGGEARGELFWDDGESLEVLERGAYTQVIFLARNNTIVNELVRVTSEGAGLQLQKVTVLGVATAPQQVLSNGVPVSNFTYSPDTKVLDICVSLLMGEQFLVSWC.

Positions 1 to 27 (MGVRHPPCSHRLLAVCALVSLATAALL) are cleaved as a signal peptide. The propeptide occupies 28 to 69 (GHILLHDFLLVPRELSGSSPVLEETHPAHQQGASRPGPRDAQ). Residues 47–82 (PVLEETHPAHQQGASRPGPRDAQAHPGRPRAVPTQC) are disordered. Residues 80 to 131 (TQCDVPPNSRFDCAPDKAITQEQCEARGCCYIPAKQGLQGAQMGQPWCFFPP) enclose the P-type domain. 3 disulfides stabilise this stretch: Cys-82–Cys-109, Cys-92–Cys-108, and Cys-103–Cys-127. 3 N-linked (GlcNAc...) asparagine glycosylation sites follow: Asn-140, Asn-233, and Asn-390. Residue Asp-404 coordinates substrate. Asn-470 carries an N-linked (GlcNAc...) asparagine glycan. Asp-518 serves as the catalytic Nucleophile. Residue Glu-521 is part of the active site. A disulfide bridge links Cys-533 with Cys-558. The substrate site is built by Arg-600 and Asp-616. Cys-647 and Cys-658 are disulfide-bonded. Asn-652 carries an N-linked (GlcNAc...) asparagine glycan. His-674 is a substrate binding site. N-linked (GlcNAc...) asparagine glycans are attached at residues Asn-882 and Asn-925.

It belongs to the glycosyl hydrolase 31 family. The different forms of acid glucosidase are obtained by proteolytic processing. Post-translationally, phosphorylation of mannose residues ensures efficient transport of the enzyme to the lysosomes via the mannose 6-phosphate receptor.

The protein resides in the lysosome. Its subcellular location is the lysosome membrane. It carries out the reaction Hydrolysis of terminal, non-reducing (1-&gt;4)-linked alpha-D-glucose residues with release of alpha-D-glucose.. Its function is as follows. Essential for the degradation of glycogen in lysosomes. Has highest activity on alpha-1,4-linked glycosidic linkages, but can also hydrolyze alpha-1,6-linked glucans. This is Lysosomal alpha-glucosidase (GAA) from Homo sapiens (Human).